The primary structure comprises 101 residues: NAD(P)H-quinone oxidoreductase subunit 4L, chloroplastic (101 aa).

The next 3 helical transmembrane spans lie at 2–22 (MLEY…YGLI), 32–52 (MCLE…SDLF), and 61–81 (IFSI…PAIV).

Belongs to the complex I subunit 4L family. NDH is composed of at least 16 different subunits, 5 of which are encoded in the nucleus.

It is found in the plastid. It localises to the chloroplast thylakoid membrane. The catalysed reaction is a plastoquinone + NADH + (n+1) H(+)(in) = a plastoquinol + NAD(+) + n H(+)(out). It carries out the reaction a plastoquinone + NADPH + (n+1) H(+)(in) = a plastoquinol + NADP(+) + n H(+)(out). In terms of biological role, NDH shuttles electrons from NAD(P)H:plastoquinone, via FMN and iron-sulfur (Fe-S) centers, to quinones in the photosynthetic chain and possibly in a chloroplast respiratory chain. The immediate electron acceptor for the enzyme in this species is believed to be plastoquinone. Couples the redox reaction to proton translocation, and thus conserves the redox energy in a proton gradient. This chain is NAD(P)H-quinone oxidoreductase subunit 4L, chloroplastic, found in Acorus calamus var. americanus (American sweet flag).